A 478-amino-acid polypeptide reads, in one-letter code: Sodium-coupled neutral amino acid transporter 5 (478 aa).

Positions Met1–Leu20 are disordered. Over Met1–Gly57 the chain is Cytoplasmic. A helical transmembrane segment spans residues Met58 to Ala80. Residues His81 to Cys93 are Extracellular-facing. The helical transmembrane segment at Ile94–Ile114 threads the bilayer. At Arg115–Val131 the chain is on the cytoplasmic side. Residues Val132–Ile152 traverse the membrane as a helical segment. Residues Lys153–Trp172 lie on the Extracellular side of the membrane. The helical transmembrane segment at Phe173 to Leu193 threads the bilayer. At Met194–Gly198 the chain is on the cytoplasmic side. The helical transmembrane segment at Tyr199 to Ile219 threads the bilayer. The Extracellular segment spans residues Tyr220–Gln263. A disulfide bridge connects residues Cys227 and Cys253. Asn232 is a glycosylation site (N-linked (GlcNAc...) asparagine). Residues Met264–Ile284 traverse the membrane as a helical segment. The Cytoplasmic portion of the chain corresponds to Tyr285–Asn301. A helical transmembrane segment spans residues Val302–Phe322. Residues Tyr323–Leu340 lie on the Extracellular side of the membrane. The chain crosses the membrane as a helical span at residues Ile341 to Phe361. Over Pro362 to His382 the chain is Cytoplasmic. The chain crosses the membrane as a helical span at residues Val383–Ile403. The Extracellular segment spans residues Arg404–Asp405. A helical membrane pass occupies residues Ile406 to Phe426. Residues Tyr427–Gln445 are Cytoplasmic-facing. A helical membrane pass occupies residues Ala446–Ala466. Over Asn467–His478 the chain is Extracellular.

It belongs to the amino acid/polyamine transporter 2 family.

Its subcellular location is the cell membrane. It catalyses the reaction L-serine(out) + Na(+)(out) + H(+)(in) = L-serine(in) + Na(+)(in) + H(+)(out). It carries out the reaction L-alanine(out) + Na(+)(out) + H(+)(in) = L-alanine(in) + Na(+)(in) + H(+)(out). The catalysed reaction is glycine(out) + Na(+)(out) + H(+)(in) = glycine(in) + Na(+)(in) + H(+)(out). The enzyme catalyses L-glutamine(out) + Na(+)(out) + H(+)(in) = L-glutamine(in) + Na(+)(in) + H(+)(out). It catalyses the reaction L-asparagine(out) + Na(+)(out) + H(+)(in) = L-asparagine(in) + Na(+)(in) + H(+)(out). It carries out the reaction L-histidine(out) + Na(+)(out) + H(+)(in) = L-histidine(in) + Na(+)(in) + H(+)(out). The catalysed reaction is L-cysteine(out) + Na(+)(out) + H(+)(in) = L-cysteine(in) + Na(+)(in) + H(+)(out). Not inhibited by lithium. Partial allosteric regulation on ions sodium binding. Functionally, symporter that cotransports neutral amino acids and sodium ions, coupled to an H(+) antiporter activity. Releases L-glutamine and glycine from astroglial cells and may participate in the glutamate/GABA-glutamine cycle and the NMDA receptors activation. In addition contributes significantly to L-glutamine uptake in retina, namely in ganglion and Mueller cells and, therefore participates in the retinal glutamate-glutamine cycle. The transport activity is pH sensitive, Li(+) tolerant, bidirectional and associated with large uncoupled fluxes of protons. The transport is electroneutral coupled to the cotransport of 1 Na(+) and the antiport of 1 H(+). May have particular importance for modulation of net hepatic glutamine flux. This Bos taurus (Bovine) protein is Sodium-coupled neutral amino acid transporter 5.